Reading from the N-terminus, the 1476-residue chain is ABC transporter G family member 17 (1476 aa).

Disordered regions lie at residues 13-45 (SENN…YDYD) and 68-91 (FREI…KPEN). Residues 14 to 67 (ENNNNNNNNNNNNNNNNNNNLNNNNDNDYDYDSINNIEEKFENVSKELEGQSIK) are a coiled coil. A compositionally biased stretch (low complexity) spans 15–39 (NNNNNNNNNNNNNNNNNNNLNNNND). Residues 151 to 402 (LNPFNYFKKD…FLDLGFDCEP (252 aa)) enclose the ABC transporter 1 domain. One can recognise an ABC transmembrane type-2 1 domain in the interval 507–751 (WGDKFTLTSR…SLSVKGENYL (245 aa)). 5 consecutive transmembrane segments (helical) span residues 517-537 (FLTI…QPLT), 547-567 (AIFT…HGAL), 592-612 (ILID…IVYF), 623-643 (FFIF…LFRG), and 764-784 (LNVV…LFAV). The ABC transporter 2 domain maps to 838-1082 (FSWKSISYTV…LTSYFERHGV (245 aa)). Residue 874–881 (GSSGAGKT) coordinates ATP. 6 helical membrane-spanning segments follow: residues 1182-1202 (FYTM…GFTF), 1219-1239 (SWEA…MFFI), 1260-1280 (LSMI…FFIA), 1298-1318 (WLMH…LGAA), 1322-1342 (IAIS…LCGV), and 1450-1470 (FGII…FVYL). Residues 1182 to 1405 (FYTMGSFAQS…TDCQTYSAPF (224 aa)) enclose the ABC transmembrane type-2 2 domain.

It belongs to the ABC transporter superfamily. ABCG family. PDR (TC 3.A.1.205) subfamily.

It is found in the membrane. This Dictyostelium discoideum (Social amoeba) protein is ABC transporter G family member 17 (abcG17-1).